Here is a 306-residue protein sequence, read N- to C-terminus: UDP-3-O-acyl-N-acetylglucosamine deacetylase (306 aa).

Zn(2+) is bound by residues His79, His238, and Asp242. The Proton donor role is filled by His265.

The protein belongs to the LpxC family. Zn(2+) is required as a cofactor.

It carries out the reaction a UDP-3-O-[(3R)-3-hydroxyacyl]-N-acetyl-alpha-D-glucosamine + H2O = a UDP-3-O-[(3R)-3-hydroxyacyl]-alpha-D-glucosamine + acetate. Its pathway is glycolipid biosynthesis; lipid IV(A) biosynthesis; lipid IV(A) from (3R)-3-hydroxytetradecanoyl-[acyl-carrier-protein] and UDP-N-acetyl-alpha-D-glucosamine: step 2/6. Functionally, catalyzes the hydrolysis of UDP-3-O-myristoyl-N-acetylglucosamine to form UDP-3-O-myristoylglucosamine and acetate, the committed step in lipid A biosynthesis. In Idiomarina loihiensis (strain ATCC BAA-735 / DSM 15497 / L2-TR), this protein is UDP-3-O-acyl-N-acetylglucosamine deacetylase.